Here is a 535-residue protein sequence, read N- to C-terminus: GMP synthase [glutamine-hydrolyzing] (535 aa).

One can recognise a Glutamine amidotransferase type-1 domain in the interval 4 to 210 (KILILDFGSQ…VHEICKCKPD (207 aa)). C85 serves as the catalytic Nucleophile. Catalysis depends on residues H184 and E186. The GMPS ATP-PPase domain maps to 211-403 (WVMGDYIAEA…LGLPREMVYR (193 aa)). 238 to 244 (SGGVDSS) serves as a coordination point for ATP.

Homodimer.

It carries out the reaction XMP + L-glutamine + ATP + H2O = GMP + L-glutamate + AMP + diphosphate + 2 H(+). It participates in purine metabolism; GMP biosynthesis; GMP from XMP (L-Gln route): step 1/1. Its function is as follows. Catalyzes the synthesis of GMP from XMP. In Polynucleobacter necessarius subsp. necessarius (strain STIR1), this protein is GMP synthase [glutamine-hydrolyzing].